The chain runs to 399 residues: Fructose-1,6-bisphosphate aldolase/phosphatase (399 aa).

Aspartate 11 serves as the catalytic Proton acceptor; for FBP phosphatase activity. Residues aspartate 11, histidine 18, aspartate 52, and aspartate 53 each coordinate Mg(2+). Histidine 18 contributes to the beta-D-fructose 1,6-bisphosphate binding site. Histidine 18 is a dihydroxyacetone phosphate binding site. A beta-D-fructose 1,6-bisphosphate-binding site is contributed by tyrosine 91. Residue glutamine 95 coordinates Mg(2+). 104–105 is a binding site for beta-D-fructose 1,6-bisphosphate; that stretch reads GN. Position 132 (aspartate 132) interacts with Mg(2+). Position 133 (lysine 133) interacts with beta-D-fructose 1,6-bisphosphate. Position 133 (lysine 133) interacts with dihydroxyacetone phosphate. The active-site Proton donor/acceptor; for FBP aldolase activity is the tyrosine 229. Residues lysine 232, aspartate 233, and aspartate 234 each coordinate Mg(2+). Lysine 232 functions as the Schiff-base intermediate with DHAP; for FBP aldolase activity in the catalytic mechanism. Residues 242–243, arginine 266, aspartate 297, and tyrosine 358 each bind beta-D-fructose 1,6-bisphosphate; that span reads QS. Positions 266 and 297 each coordinate dihydroxyacetone phosphate.

The protein belongs to the FBP aldolase/phosphatase family. Homooctamer; dimer of tetramers. Requires Mg(2+) as cofactor.

The enzyme catalyses beta-D-fructose 1,6-bisphosphate + H2O = beta-D-fructose 6-phosphate + phosphate. The catalysed reaction is beta-D-fructose 1,6-bisphosphate = D-glyceraldehyde 3-phosphate + dihydroxyacetone phosphate. The protein operates within carbohydrate biosynthesis; gluconeogenesis. Its function is as follows. Catalyzes two subsequent steps in gluconeogenesis: the aldol condensation of dihydroxyacetone phosphate (DHAP) and glyceraldehyde-3-phosphate (GA3P) to fructose-1,6-bisphosphate (FBP), and the dephosphorylation of FBP to fructose-6-phosphate (F6P). This chain is Fructose-1,6-bisphosphate aldolase/phosphatase, found in Pyrobaculum neutrophilum (strain DSM 2338 / JCM 9278 / NBRC 100436 / V24Sta) (Thermoproteus neutrophilus).